Consider the following 168-residue polypeptide: Phosphopantetheine adenylyltransferase (168 aa).

A substrate-binding site is contributed by Ser8. ATP is bound by residues 8 to 9 (SF) and His16. Residues Lys40, Thr72, and Arg86 each contribute to the substrate site. Residues 87–89 (GLR), Glu97, and 122–128 (YSFLSSS) each bind ATP.

This sequence belongs to the bacterial CoaD family. Homohexamer. Mg(2+) is required as a cofactor.

It localises to the cytoplasm. The enzyme catalyses (R)-4'-phosphopantetheine + ATP + H(+) = 3'-dephospho-CoA + diphosphate. It functions in the pathway cofactor biosynthesis; coenzyme A biosynthesis; CoA from (R)-pantothenate: step 4/5. Reversibly transfers an adenylyl group from ATP to 4'-phosphopantetheine, yielding dephospho-CoA (dPCoA) and pyrophosphate. The polypeptide is Phosphopantetheine adenylyltransferase (Thermosynechococcus vestitus (strain NIES-2133 / IAM M-273 / BP-1)).